We begin with the raw amino-acid sequence, 384 residues long: MEMDLSKVTLDIFTKLEQKWLSHCDSSRKTRILSIDGGGTTGIVAAASILHLEHQIRLQTGDPHAHISDFFDIVAGTGIGGILAALLVADDGSGRPMFTARDAVKFVAEKNSELFEIRYTGVFRRNKRYSGKSMERVLETAFRREDGKVLTMKDTCKPLLVPCYDLKTSAPFVFSRAGASESPSFDFELWKVCRATSATPSLFKPFSVVSVDGKTSCSAVDGGLVMNNPTAAAVTHVLHNKRDFPSVNGVDDLLVLSLGNGPSTMSSSPGRKLRRNGDYSTSSVVDIVVDGVSDTVDQMLGNAFCWNRTDYVRIQANGLTSGGAEELLKERGVETAPFGVKRILTESNGERIEGFVQRLVASGKSSLPPSPCKESAVNPLADGR.

One can recognise a PNPLA domain in the interval 33–234 (LSIDGGGTTG…VMNNPTAAAV (202 aa)). The GXGXXG motif lies at 37 to 42 (GGGTTG). Residue aspartate 221 is the Proton acceptor of the active site. The DGA/G signature appears at 221–223 (DGG). The disordered stretch occupies residues 363 to 384 (GKSSLPPSPCKESAVNPLADGR).

The protein belongs to the patatin family. As to expression, highly expressed in roots and at lower levels in flowers and siliques.

The sequence is that of Probable inactive patatin-like protein 9 (PLP9) from Arabidopsis thaliana (Mouse-ear cress).